We begin with the raw amino-acid sequence, 306 residues long: uncharacterized protein (306 aa).

Belongs to the asfivirus CP312R family.

The protein localises to the virion. This is an uncharacterized protein from African swine fever virus (isolate Pig/Kenya/KEN-50/1950) (ASFV).